Consider the following 492-residue polypeptide: Bifunctional purine biosynthesis protein PurH (492 aa).

The MGS-like domain maps to 1 to 144; it reads MKKVILSVSD…KNFKHVTTIV (144 aa).

It belongs to the PurH family.

The enzyme catalyses (6R)-10-formyltetrahydrofolate + 5-amino-1-(5-phospho-beta-D-ribosyl)imidazole-4-carboxamide = 5-formamido-1-(5-phospho-D-ribosyl)imidazole-4-carboxamide + (6S)-5,6,7,8-tetrahydrofolate. It catalyses the reaction IMP + H2O = 5-formamido-1-(5-phospho-D-ribosyl)imidazole-4-carboxamide. It functions in the pathway purine metabolism; IMP biosynthesis via de novo pathway; 5-formamido-1-(5-phospho-D-ribosyl)imidazole-4-carboxamide from 5-amino-1-(5-phospho-D-ribosyl)imidazole-4-carboxamide (10-formyl THF route): step 1/1. It participates in purine metabolism; IMP biosynthesis via de novo pathway; IMP from 5-formamido-1-(5-phospho-D-ribosyl)imidazole-4-carboxamide: step 1/1. This Staphylococcus carnosus (strain TM300) protein is Bifunctional purine biosynthesis protein PurH.